The sequence spans 243 residues: Probable sentrin-specific protease 8 (243 aa).

The segment at 12–185 is protease; it reads SAIYQSDINI…LYVLSIIEEL (174 aa). Residues histidine 109 and aspartate 126 contribute to the active site. Residue cysteine 174 is the Nucleophile of the active site.

This sequence belongs to the peptidase C48 family.

Functionally, protease that catalyzes two essential functions in the nedd8 pathway: processing of full-length nedd8 to its mature form and deconjugation of nedd8 from targeted proteins. The protein is Probable sentrin-specific protease 8 (senp8) of Dictyostelium discoideum (Social amoeba).